The sequence spans 367 residues: DNA replication and repair protein RecF (367 aa).

Residue 30 to 37 participates in ATP binding; that stretch reads GSNGSGKT.

Belongs to the RecF family.

The protein localises to the cytoplasm. The RecF protein is involved in DNA metabolism; it is required for DNA replication and normal SOS inducibility. RecF binds preferentially to single-stranded, linear DNA. It also seems to bind ATP. In Pseudomonas putida (strain ATCC 700007 / DSM 6899 / JCM 31910 / BCRC 17059 / LMG 24140 / F1), this protein is DNA replication and repair protein RecF.